The following is a 156-amino-acid chain: Small ribosomal subunit protein uS7 (156 aa).

This sequence belongs to the universal ribosomal protein uS7 family. Part of the 30S ribosomal subunit. Contacts proteins S9 and S11.

In terms of biological role, one of the primary rRNA binding proteins, it binds directly to 16S rRNA where it nucleates assembly of the head domain of the 30S subunit. Is located at the subunit interface close to the decoding center, probably blocks exit of the E-site tRNA. This Dehalococcoides mccartyi (strain ATCC BAA-2100 / JCM 16839 / KCTC 5957 / BAV1) protein is Small ribosomal subunit protein uS7.